The sequence spans 282 residues: MKIVTTVQEMQQITSELRASGKSIGFVPTMGYLHEGHATLLRKAREENEIVVLSVFVNPLQFGPNEDLDRYPRDIDRDENVAKENGVDYLFYPSVEEMYPAEQTTTVEVVKRTDVLCGQQRPGHFAGVATVLMKLFNITVPTRAYFGMKDAQQVAVIEGFVTDFNIPVTIVPVDIVREEDGLAKSSRNVYLSQDEREEALHLYRSLCIAKERIEAGERNPEIITNLVKDYIETHTKGTVDYADLYAYPSLTMVEKVEGRIILAIAVKFENVRLIDNITLTVK.

30–37 (MGYLHEGH) contacts ATP. Catalysis depends on His37, which acts as the Proton donor. (R)-pantoate is bound at residue Gln61. A beta-alanine-binding site is contributed by Gln61. Residue 147–150 (GMKD) coordinates ATP. Gln153 is a (R)-pantoate binding site. ATP is bound by residues Val176 and 184–187 (KSSR).

Belongs to the pantothenate synthetase family. Homodimer.

The protein localises to the cytoplasm. It catalyses the reaction (R)-pantoate + beta-alanine + ATP = (R)-pantothenate + AMP + diphosphate + H(+). It participates in cofactor biosynthesis; (R)-pantothenate biosynthesis; (R)-pantothenate from (R)-pantoate and beta-alanine: step 1/1. In terms of biological role, catalyzes the condensation of pantoate with beta-alanine in an ATP-dependent reaction via a pantoyl-adenylate intermediate. This is Pantothenate synthetase from Bacillus cereus (strain B4264).